The sequence spans 397 residues: MSDTLLNPYFGEFGGMYVPEILVPVLKQLEQAFVEAQNDPTFQAEFADLLKNYAGRPTALTLCRNLTKGTKTKLYLKREDLLHGGAHKTNQVLGQILLAKRMGKTRIIAETGAGQHGVATALACAMLDMPCRVYMGAKDVERQSPNVFRMRLMGAEVIPVQKGSCSLKDACCEAMRDWSANYETTHYLLGTAAGPHPFPTIVKEFQKMIGEETKRQILEREGRLPDAVIAAVGGGSNAIGMFADFIDESNVRLIGVEPAGKGIETGEHGAPLKHGTTGIYFGMKSPIMQDKDGQIEESYSISAGLDFPSVGPQHAYLNEIGRADYVSITDEEALNAFQELAKHEGIIPALESSHALAYALKLIKQNPEKEQLLVVNLSGRGDKDIFTVDKILNGGTN.

Lys-88 bears the N6-(pyridoxal phosphate)lysine mark.

It belongs to the TrpB family. Tetramer of two alpha and two beta chains. The cofactor is pyridoxal 5'-phosphate.

The enzyme catalyses (1S,2R)-1-C-(indol-3-yl)glycerol 3-phosphate + L-serine = D-glyceraldehyde 3-phosphate + L-tryptophan + H2O. It functions in the pathway amino-acid biosynthesis; L-tryptophan biosynthesis; L-tryptophan from chorismate: step 5/5. Functionally, the beta subunit is responsible for the synthesis of L-tryptophan from indole and L-serine. This Haemophilus influenzae (strain PittEE) protein is Tryptophan synthase beta chain.